Here is a 149-residue protein sequence, read N- to C-terminus: Transcriptional repressor NrdR (149 aa).

Residues 3–34 (CPFCFAVDTKVIDSRLVGEGSSVRRRRQCLVC) fold into a zinc finger. Residues 49 to 139 (PRVVKSNDVR…VYRSFEDIKE (91 aa)) enclose the ATP-cone domain.

Belongs to the NrdR family. It depends on Zn(2+) as a cofactor.

Negatively regulates transcription of bacterial ribonucleotide reductase nrd genes and operons by binding to NrdR-boxes. This chain is Transcriptional repressor NrdR, found in Escherichia fergusonii (strain ATCC 35469 / DSM 13698 / CCUG 18766 / IAM 14443 / JCM 21226 / LMG 7866 / NBRC 102419 / NCTC 12128 / CDC 0568-73).